Here is a 446-residue protein sequence, read N- to C-terminus: NADH-quinone oxidoreductase subunit D (446 aa).

Belongs to the complex I 49 kDa subunit family. NDH-1 is composed of 14 different subunits. Subunits NuoB, C, D, E, F, and G constitute the peripheral sector of the complex.

Its subcellular location is the cell membrane. The catalysed reaction is a quinone + NADH + 5 H(+)(in) = a quinol + NAD(+) + 4 H(+)(out). Functionally, NDH-1 shuttles electrons from NADH, via FMN and iron-sulfur (Fe-S) centers, to quinones in the respiratory chain. The immediate electron acceptor for the enzyme in this species is believed to be a menaquinone. Couples the redox reaction to proton translocation (for every two electrons transferred, four hydrogen ions are translocated across the cytoplasmic membrane), and thus conserves the redox energy in a proton gradient. The protein is NADH-quinone oxidoreductase subunit D of Nocardioides sp. (strain ATCC BAA-499 / JS614).